Reading from the N-terminus, the 410-residue chain is Mating-type locus allele B6 protein (410 aa).

Positions 1-110 (MSRDPKLSLS…VNVASPAVEY (110 aa)) are variable domain between B alleles. Positions 107–184 (AVEYRNLSED…NARRRSGWSH (78 aa)) form a DNA-binding region, homeobox; TALE-type. Residues 111–410 (RNLSEDLPAY…PFFCLSIAFV (300 aa)) are highly conserved between B alleles. Disordered regions lie at residues 202–224 (RAKLSSSNQSTPPSLTSEKPSDD), 278–335 (TPKP…TPEL), and 373–393 (KARGNRKVKALPKRAGKQQPD). A compositionally biased stretch (polar residues) spans 205 to 219 (LSSSNQSTPPSLTSE). The Nuclear localization signal signature appears at 276 to 308 (KKTPKPGMPRPVTTVAKRQPARKTKPAAKPKSR). Positions 294 to 307 (QPARKTKPAAKPKS) are enriched in basic residues. The segment covering 312–335 (PRASTTPSIDSTLDSSKLESTPEL) has biased composition (polar residues). The segment at 333–410 (PELSMCSTAD…PFFCLSIAFV (78 aa)) is not essential for B6 function. The segment covering 375–388 (RGNRKVKALPKRAG) has biased composition (basic residues).

Belongs to the TALE/M-ATYP homeobox family.

Its subcellular location is the nucleus. Functionally, the B locus has at least 25 alleles, and any combination of two different B alleles yields a multimeric regulatory protein, that activates genes responsible for the pathogenicity and for the sexual development of the fungus within the corn plant. In Mycosarcoma maydis (Corn smut fungus), this protein is Mating-type locus allele B6 protein.